The chain runs to 384 residues: Transcriptional regulator of the unfolded protein response hacA (384 aa).

A compositionally biased stretch (polar residues) spans M1 to P18. Disordered stretches follow at residues M1–L27 and L41–I94. Residues K84 to I94 show a composition bias toward basic and acidic residues. The bZIP domain occupies E90–L153. Residues R92–R101 are basic motif. The interval I106–L113 is leucine-zipper. 2 disordered regions span residues S208 to L256 and P331 to Q384. A compositionally biased stretch (low complexity) spans S218–T240.

It belongs to the bZIP family.

Its subcellular location is the nucleus. Its function is as follows. Master transcriptional regulator of the unfolded protein response (UPR) that recognizes and binds to the UPR element (UPRE) in the promoter of UPR-regulated genes. Exposure to antifungals and ER-stressing agents initiates the activation of hacA which occurs when a 20 nucleotide fragment is removed from part of the exon-2 and part of intron-2, which in turn promotes the arisen of the DNA binding site motif and a dimer interface domain. Modulates the expression of genes related to cell wall synthesis, ergosterol biosynthesis, pigmentation, heat shock proteins, and the genes coding for mannosyltransferase enzymes. Plays a key role in both response to stress and host-pathogen interaction. The sequence is that of Transcriptional regulator of the unfolded protein response hacA from Trichophyton rubrum (strain ATCC MYA-4607 / CBS 118892) (Athlete's foot fungus).